Here is a 252-residue protein sequence, read N- to C-terminus: 5-oxoprolinase subunit A (252 aa).

Belongs to the LamB/PxpA family. In terms of assembly, forms a complex composed of PxpA, PxpB and PxpC.

The catalysed reaction is 5-oxo-L-proline + ATP + 2 H2O = L-glutamate + ADP + phosphate + H(+). Functionally, catalyzes the cleavage of 5-oxoproline to form L-glutamate coupled to the hydrolysis of ATP to ADP and inorganic phosphate. The sequence is that of 5-oxoprolinase subunit A from Bordetella pertussis (strain Tohama I / ATCC BAA-589 / NCTC 13251).